The following is a 991-amino-acid chain: MDEVIKAKRQQQNAGSSLRAITIRGAREHNLKNIDVEIPRDKLVVFTGLSGSGKSSLAFDTIYAEGQRRYVESLSAYARQFLEMMQKPDVDQIDGLSPAISIEQKTTSKNPRSTVGTVTEIYDYMRLLWARVGVPYSPATGLPIESQTVSQMVDRVLALPEGTRLYLLAPVVRGRKGEYRKELAEWLKKGFQRVKIDGTFHELAEAPTLDKKFPHDIDVVVDRIVVRADIGQRLAESFETALKLAEGLAVVEFADAPAAAPAEEKKKTAKIHDKSGPERILFSEKFACPVSGFTIPEIEPRLFSFNNPYGACPACGGLGVEQHVDEDLVIPDKELAIGKGAIAPWAKSSSPYYVQTLTALGKHYKFTLTTKWKDLPKKTRDAILHGSGEDEIKFSYEDGVRSYDTKKPFEGVITNINRRYRETESEWAREELAKYFHDVPCGACNGFRLKPEALCVKVGTKHIGEISELSVKKAGEWFETVPEALNKQQNEIAGRILKEIRERLTFLLDVGLNYLTLSRSSGTLSGGESQRIRLASQIGSGLTGVLYVLDEPSIGLHQRDNARLLDTLKRLRDLGNTVVVVEHDEDAIRLADYVLDIGPGAGMHGGHIVAEGTPAEIMRNPKSLTGKYLTGELEVEVPERRPPNHRRTIKVVNARGNNLKNVTAEIPLGLFTCVTGVSGGGKSTLLIDTLYRAIARKLNNASEGAAPHDRIEGLEHIDKIIDIDQSPIGRTPRSNPATYTGAFTPIREWFAGLPEAKARGYEPGRFSFNVKGGRCEACQGDGVIKIEMHFLPDVYVTCDVCKGKRYNRETLEVLFKGKSIADVLDMTVEEAADFFKAVPRVRETFQTLHRVGLDYIHVGQQATTLSGGEAQRVKLAKELSKRATGRTLYILDEPTTGLHFHDVKKLLEVLHELVAQGNTVVVIEHNLEVIKTADWVIDLGPEGGDGGGEIVAWGPPEDIAKAPRSYTGKFLEPVLKKARKPKRRSTSEAAE.

48 to 55 (GLSGSGKS) contacts ATP. ABC transporter domains are found at residues 345-624 (WAKS…PKSL) and 644-972 (NHRR…KFLE). Position 676–683 (676–683 (GVSGGGKS)) interacts with ATP. The C4-type zinc-finger motif lies at 775 to 801 (CEACQGDGVIKIEMHFLPDVYVTCDVC).

This sequence belongs to the ABC transporter superfamily. UvrA family. As to quaternary structure, forms a heterotetramer with UvrB during the search for lesions.

It is found in the cytoplasm. In terms of biological role, the UvrABC repair system catalyzes the recognition and processing of DNA lesions. UvrA is an ATPase and a DNA-binding protein. A damage recognition complex composed of 2 UvrA and 2 UvrB subunits scans DNA for abnormalities. When the presence of a lesion has been verified by UvrB, the UvrA molecules dissociate. This is UvrABC system protein A from Bradyrhizobium diazoefficiens (strain JCM 10833 / BCRC 13528 / IAM 13628 / NBRC 14792 / USDA 110).